We begin with the raw amino-acid sequence, 361 residues long: MAGNTIGQLFRVTTFGESHGLALGCIVDGVPPGIPLTEADLQHDLDRRRPGTSRYTTQRREPDQVKILSGVFEGVTTGTSIGLLIENTDQRSQDYSAIKDVFRPGHADYTYEQKYGLRDYRGGGRSSARETAMRVAAGAIAKKYLAEKFGIEIRGCLTQMGDIPLEIKDWSQVEQNPFFCPDPDKIDALDELMRALKKEGDSIGAKVTVVASGVPAGLGEPVFDRLDADIAHALMSINAVKGVEIGDGFDVVALRGSQNRDEITKDGFQSNHAGGILGGISSGQQIIAHMALKPTSSITVPGRTINRFGEEVEMITKGRHDPCVGIRAVPIAEAMLAIVLMDHLLRQRAQNADVKTHIPRW.

The NADP(+) site is built by R48 and R54. FMN-binding positions include 125–127 (RSS), 238–239 (NA), G278, 293–297 (KPTSS), and R319.

This sequence belongs to the chorismate synthase family. Homotetramer. The cofactor is FMNH2.

The catalysed reaction is 5-O-(1-carboxyvinyl)-3-phosphoshikimate = chorismate + phosphate. The protein operates within metabolic intermediate biosynthesis; chorismate biosynthesis; chorismate from D-erythrose 4-phosphate and phosphoenolpyruvate: step 7/7. Catalyzes the anti-1,4-elimination of the C-3 phosphate and the C-6 proR hydrogen from 5-enolpyruvylshikimate-3-phosphate (EPSP) to yield chorismate, which is the branch point compound that serves as the starting substrate for the three terminal pathways of aromatic amino acid biosynthesis. This reaction introduces a second double bond into the aromatic ring system. In Escherichia coli O139:H28 (strain E24377A / ETEC), this protein is Chorismate synthase.